The following is a 301-amino-acid chain: GTPase Era (301 aa).

Residues 6–173 (KSGFVAIVGR…LEQTNANLEI (168 aa)) enclose the Era-type G domain. The interval 14-21 (GRPNVGKS) is G1. 14-21 (GRPNVGKS) is a binding site for GTP. Residues 40-44 (QTTRN) form a G2 region. Residues 61–64 (DTPG) are G3. Residues 61 to 65 (DTPGI) and 123 to 126 (NKID) each bind GTP. Positions 123 to 126 (NKID) are G4. The segment at 152 to 154 (ISA) is G5. Residues 204-282 (TREEVPHSVA…FLEVWVKVQK (79 aa)) enclose the KH type-2 domain.

This sequence belongs to the TRAFAC class TrmE-Era-EngA-EngB-Septin-like GTPase superfamily. Era GTPase family. As to quaternary structure, monomer.

Its subcellular location is the cytoplasm. It localises to the cell membrane. In terms of biological role, an essential GTPase that binds both GDP and GTP, with rapid nucleotide exchange. Plays a role in 16S rRNA processing and 30S ribosomal subunit biogenesis and possibly also in cell cycle regulation and energy metabolism. This chain is GTPase Era, found in Listeria monocytogenes serotype 4a (strain HCC23).